Here is a 618-residue protein sequence, read N- to C-terminus: Glucose starvation modulator protein 1 (618 aa).

The zn(2)-C6 fungal-type DNA-binding region spans 20–48 (CEFCHTKHIQCDVGRPCQNCLKRNIGKFC). Positions 325 to 353 (ANANTQPSHNAKLESECDSSSHSDADLEK) are disordered. Residues 335–353 (AKLESECDSSSHSDADLEK) show a composition bias toward basic and acidic residues. Residues 466–538 (LLDLENMAKL…QIFNELLAFG (73 aa)) enclose the PAS domain.

This sequence belongs to the ERT1/acuK family.

It localises to the nucleus. In terms of biological role, transcription factor which regulates nonfermentable carbon utilization. Binds specifically to 5'-CGGN(8)CGG-3' and 5'-CGGN(9)CGG-3' sequences in the promoter region. In Saccharomyces cerevisiae (strain JAY291) (Baker's yeast), this protein is Glucose starvation modulator protein 1 (GSM1).